The primary structure comprises 302 residues: Homoserine kinase (302 aa).

90–100 (KPGSGLGSSSA) contacts ATP.

Belongs to the GHMP kinase family. Homoserine kinase subfamily.

It localises to the cytoplasm. It catalyses the reaction L-homoserine + ATP = O-phospho-L-homoserine + ADP + H(+). It participates in amino-acid biosynthesis; L-threonine biosynthesis; L-threonine from L-aspartate: step 4/5. In terms of biological role, catalyzes the ATP-dependent phosphorylation of L-homoserine to L-homoserine phosphate. In Methanococcus vannielii (strain ATCC 35089 / DSM 1224 / JCM 13029 / OCM 148 / SB), this protein is Homoserine kinase.